The chain runs to 240 residues: Myogenic factor 6 (240 aa).

A bHLH domain is found at 91-142 (DRRKAATLRERRRLKKINEAFEALKRRTVANPNQRLPKVEILRSAINYIERL).

Efficient DNA binding requires dimerization with another bHLH protein. As to expression, skeletal muscle.

It is found in the nucleus. Involved in muscle differentiation (myogenic factor). Induces fibroblasts to differentiate into myoblasts. Probable sequence specific DNA-binding protein. The sequence is that of Myogenic factor 6 (myf6) from Xenopus laevis (African clawed frog).